The sequence spans 56 residues: uncharacterized protein (56 aa).

It belongs to the archaeal ATPase family.

This is an uncharacterized protein from Methanocaldococcus jannaschii (strain ATCC 43067 / DSM 2661 / JAL-1 / JCM 10045 / NBRC 100440) (Methanococcus jannaschii).